Consider the following 419-residue polypeptide: Serine hydroxymethyltransferase (419 aa).

(6S)-5,6,7,8-tetrahydrofolate is bound by residues leucine 120 and 124 to 126 (GHL). At lysine 229 the chain carries N6-(pyridoxal phosphate)lysine.

It belongs to the SHMT family. As to quaternary structure, homodimer. It depends on pyridoxal 5'-phosphate as a cofactor.

The protein localises to the cytoplasm. It catalyses the reaction (6R)-5,10-methylene-5,6,7,8-tetrahydrofolate + glycine + H2O = (6S)-5,6,7,8-tetrahydrofolate + L-serine. It functions in the pathway one-carbon metabolism; tetrahydrofolate interconversion. Its pathway is amino-acid biosynthesis; glycine biosynthesis; glycine from L-serine: step 1/1. Its function is as follows. Catalyzes the reversible interconversion of serine and glycine with tetrahydrofolate (THF) serving as the one-carbon carrier. This reaction serves as the major source of one-carbon groups required for the biosynthesis of purines, thymidylate, methionine, and other important biomolecules. Also exhibits THF-independent aldolase activity toward beta-hydroxyamino acids, producing glycine and aldehydes, via a retro-aldol mechanism. The chain is Serine hydroxymethyltransferase from Herpetosiphon aurantiacus (strain ATCC 23779 / DSM 785 / 114-95).